The following is a 136-amino-acid chain: Phosphoribosyl-AMP cyclohydrolase (136 aa).

A Mg(2+)-binding site is contributed by Asp92. Cys93 serves as a coordination point for Zn(2+). The Mg(2+) site is built by Asp94 and Asp96. Residues Cys109 and Cys116 each contribute to the Zn(2+) site.

Belongs to the PRA-CH family. In terms of assembly, homodimer. Mg(2+) is required as a cofactor. The cofactor is Zn(2+).

The protein localises to the cytoplasm. The enzyme catalyses 1-(5-phospho-beta-D-ribosyl)-5'-AMP + H2O = 1-(5-phospho-beta-D-ribosyl)-5-[(5-phospho-beta-D-ribosylamino)methylideneamino]imidazole-4-carboxamide. It participates in amino-acid biosynthesis; L-histidine biosynthesis; L-histidine from 5-phospho-alpha-D-ribose 1-diphosphate: step 3/9. Reversibly inhibited by EDTA and free zinc ions. Enzyme is inactivated by dialysis against 1,10-phenanthroline, which is a zinc specific chelator. Catalyzes the hydrolysis of the adenine ring of phosphoribosyl-AMP. This Methanococcus vannielii protein is Phosphoribosyl-AMP cyclohydrolase.